A 1203-amino-acid polypeptide reads, in one-letter code: DNA-directed RNA polymerase subunit beta (1203 aa).

Residues alanine 1174–alanine 1195 are compositionally biased toward basic and acidic residues. The tract at residues alanine 1174–glutamate 1203 is disordered.

The protein belongs to the RNA polymerase beta chain family. In terms of assembly, the RNAP catalytic core consists of 2 alpha, 1 beta, 1 beta' and 1 omega subunit. When a sigma factor is associated with the core the holoenzyme is formed, which can initiate transcription.

The enzyme catalyses RNA(n) + a ribonucleoside 5'-triphosphate = RNA(n+1) + diphosphate. Its function is as follows. DNA-dependent RNA polymerase catalyzes the transcription of DNA into RNA using the four ribonucleoside triphosphates as substrates. The chain is DNA-directed RNA polymerase subunit beta from Streptococcus pneumoniae serotype 19F (strain G54).